The sequence spans 346 residues: UDP-N-acetylenolpyruvoylglucosamine reductase (346 aa).

Residues Leu-18–His-189 form the FAD-binding PCMH-type domain. Arg-165 is a catalytic residue. Ser-240 serves as the catalytic Proton donor. The active site involves Glu-336.

This sequence belongs to the MurB family. The cofactor is FAD.

It localises to the cytoplasm. It catalyses the reaction UDP-N-acetyl-alpha-D-muramate + NADP(+) = UDP-N-acetyl-3-O-(1-carboxyvinyl)-alpha-D-glucosamine + NADPH + H(+). It functions in the pathway cell wall biogenesis; peptidoglycan biosynthesis. Cell wall formation. The chain is UDP-N-acetylenolpyruvoylglucosamine reductase from Neisseria gonorrhoeae (strain ATCC 700825 / FA 1090).